Reading from the N-terminus, the 129-residue chain is Small ribosomal subunit protein uS9 (129 aa).

This sequence belongs to the universal ribosomal protein uS9 family.

The protein is Small ribosomal subunit protein uS9 of Wolinella succinogenes (strain ATCC 29543 / DSM 1740 / CCUG 13145 / JCM 31913 / LMG 7466 / NCTC 11488 / FDC 602W) (Vibrio succinogenes).